Reading from the N-terminus, the 612-residue chain is Protein cereblon (612 aa).

The segment covering 1-11 has biased composition (acidic residues); the sequence is MDDEETAEIED. Disordered stretches follow at residues 1–30, 58–133, and 181–211; these read MDDE…GASA, MELI…NPHP, and QERR…PYDV. The segment covering 69 to 81 has biased composition (low complexity); it reads AADAPDAAASTGS. The span at 181-190 shows a compositional bias: basic and acidic residues; it reads QERRRSRTSE. Residues 250–478 enclose the Lon N-terminal domain; that stretch reads HMLIFLHQHI…IIGSTLKDES (229 aa). One can recognise a CULT domain in the interval 477 to 586; it reads ESVFYCRYCN…LAGSSVRIGK (110 aa). Residues C482, C485, C551, and C554 each coordinate Zn(2+).

This sequence belongs to the CRBN family. As to quaternary structure, likely a component of a DCX (DDB1-CUL4-X-box) protein ligase complex. May interact with pic/DDB1. In terms of processing, ubiquitinated.

It is found in the nucleus. It functions in the pathway protein modification; protein ubiquitination. Its function is as follows. Substrate recognition component of a DCX (DDB1-CUL4-X-box) E3 protein ligase complex that mediates the ubiquitination and subsequent proteasomal degradation of target proteins. Has an essential role in mediating growth by negatively regulating insulin signaling. It also has a role in maintaining presynaptic function in the neuromuscular junction synapses of third-instar larvae. This chain is Protein cereblon, found in Drosophila willistoni (Fruit fly).